The primary structure comprises 446 residues: Adenylosuccinate synthetase (446 aa).

GTP contacts are provided by residues 21-27 (GDEGKGK) and 49-51 (GHT). D22 acts as the Proton acceptor in catalysis. The Mg(2+) site is built by D22 and G49. IMP-binding positions include 22–25 (DEGK), 47–50 (NAGH), T141, R155, Q236, T251, and R319. The Proton donor role is filled by H50. Residue 315–321 (VTTGRSR) coordinates substrate. Residues R321, 347 to 349 (KLD), and 429 to 431 (STS) each bind GTP.

Belongs to the adenylosuccinate synthetase family. In terms of assembly, homodimer. Mg(2+) is required as a cofactor.

It is found in the cytoplasm. The catalysed reaction is IMP + L-aspartate + GTP = N(6)-(1,2-dicarboxyethyl)-AMP + GDP + phosphate + 2 H(+). It participates in purine metabolism; AMP biosynthesis via de novo pathway; AMP from IMP: step 1/2. Functionally, plays an important role in the de novo pathway of purine nucleotide biosynthesis. Catalyzes the first committed step in the biosynthesis of AMP from IMP. This Polaromonas naphthalenivorans (strain CJ2) protein is Adenylosuccinate synthetase.